The following is an 801-amino-acid chain: Xaa-Pro dipeptidyl-peptidase (801 aa).

Residues S371, D491, and H522 each act as charge relay system in the active site.

It belongs to the peptidase S15 family. Homodimer.

Its subcellular location is the cytoplasm. The enzyme catalyses Hydrolyzes Xaa-Pro-|- bonds to release unblocked, N-terminal dipeptides from substrates including Ala-Pro-|-p-nitroanilide and (sequentially) Tyr-Pro-|-Phe-Pro-|-Gly-Pro-|-Ile.. Functionally, removes N-terminal dipeptides sequentially from polypeptides having unsubstituted N-termini provided that the penultimate residue is proline. This chain is Xaa-Pro dipeptidyl-peptidase, found in Ligilactobacillus salivarius (strain UCC118) (Lactobacillus salivarius).